The sequence spans 207 residues: Small ribosomal subunit protein uS4 (207 aa).

Residues 31–56 are disordered; sequence KCKLDSKPGQHGRTSGARTSDYGNQL. Over residues 42-53 the composition is skewed to polar residues; the sequence is GRTSGARTSDYG. Residues 97–157 form the S4 RNA-binding domain; sequence TRLDNVVYRM…EKSKKQVRIV (61 aa).

This sequence belongs to the universal ribosomal protein uS4 family. Part of the 30S ribosomal subunit. Contacts protein S5. The interaction surface between S4 and S5 is involved in control of translational fidelity.

Its function is as follows. One of the primary rRNA binding proteins, it binds directly to 16S rRNA where it nucleates assembly of the body of the 30S subunit. In terms of biological role, with S5 and S12 plays an important role in translational accuracy. This Herminiimonas arsenicoxydans protein is Small ribosomal subunit protein uS4.